The following is a 285-amino-acid chain: Pantothenate synthetase (285 aa).

ATP is bound at residue 30-37 (MGFLHEGH). H37 acts as the Proton donor in catalysis. Q61 is a binding site for (R)-pantoate. Q61 is a binding site for beta-alanine. 147–150 (GQKD) provides a ligand contact to ATP. Residue Q153 participates in (R)-pantoate binding. ATP contacts are provided by residues V176 and 184–187 (KSSR).

It belongs to the pantothenate synthetase family. Homodimer.

The protein resides in the cytoplasm. It catalyses the reaction (R)-pantoate + beta-alanine + ATP = (R)-pantothenate + AMP + diphosphate + H(+). Its pathway is cofactor biosynthesis; (R)-pantothenate biosynthesis; (R)-pantothenate from (R)-pantoate and beta-alanine: step 1/1. In terms of biological role, catalyzes the condensation of pantoate with beta-alanine in an ATP-dependent reaction via a pantoyl-adenylate intermediate. The chain is Pantothenate synthetase from Listeria innocua serovar 6a (strain ATCC BAA-680 / CLIP 11262).